The primary structure comprises 362 residues: Cobalt-precorrin-5B C(1)-methyltransferase (362 aa).

This sequence belongs to the CbiD family.

The catalysed reaction is Co-precorrin-5B + S-adenosyl-L-methionine = Co-precorrin-6A + S-adenosyl-L-homocysteine. The protein operates within cofactor biosynthesis; adenosylcobalamin biosynthesis; cob(II)yrinate a,c-diamide from sirohydrochlorin (anaerobic route): step 6/10. Its function is as follows. Catalyzes the methylation of C-1 in cobalt-precorrin-5B to form cobalt-precorrin-6A. This chain is Cobalt-precorrin-5B C(1)-methyltransferase, found in Burkholderia cenocepacia (strain ATCC BAA-245 / DSM 16553 / LMG 16656 / NCTC 13227 / J2315 / CF5610) (Burkholderia cepacia (strain J2315)).